The chain runs to 366 residues: sn-glycerol-3-phosphate import ATP-binding protein UgpC (366 aa).

The ABC transporter domain occupies 4–235; it reads VTLRNVRKTY…PASTFVASFI (232 aa). 37–44 contacts ATP; it reads GPSGCGKS.

It belongs to the ABC transporter superfamily. sn-glycerol-3-phosphate importer (TC 3.A.1.1.3) family. In terms of assembly, the complex is composed of two ATP-binding proteins (UgpC), two transmembrane proteins (UgpA and UgpE) and a solute-binding protein (UgpB).

The protein resides in the cell inner membrane. It catalyses the reaction sn-glycerol 3-phosphate(out) + ATP + H2O = sn-glycerol 3-phosphate(in) + ADP + phosphate + H(+). Functionally, part of the ABC transporter complex UgpBAEC involved in sn-glycerol-3-phosphate (G3P) import. Responsible for energy coupling to the transport system. The sequence is that of sn-glycerol-3-phosphate import ATP-binding protein UgpC from Rhodopseudomonas palustris (strain BisB18).